The sequence spans 88 residues: MTNDSVPAKVMEIVAKQLEKDQKEVTPESSFANDLGADSLDTVELVMALEEEFGTEIPDEEAEKITTVQAAVDYIQNKMDDGKIKLEK.

Residues 4–79 (DSVPAKVMEI…AAVDYIQNKM (76 aa)) form the Carrier domain. O-(pantetheine 4'-phosphoryl)serine is present on Ser-39.

Belongs to the acyl carrier protein (ACP) family. Post-translationally, 4'-phosphopantetheine is transferred from CoA to a specific serine of apo-ACP by AcpS. This modification is essential for activity because fatty acids are bound in thioester linkage to the sulfhydryl of the prosthetic group.

The protein localises to the cytoplasm. It participates in lipid metabolism; fatty acid biosynthesis. Its function is as follows. Carrier of the growing fatty acid chain in fatty acid biosynthesis. This Trichodesmium erythraeum (strain IMS101) protein is Acyl carrier protein.